The sequence spans 554 residues: Exodeoxyribonuclease 7 large subunit (554 aa).

It belongs to the XseA family. As to quaternary structure, heterooligomer composed of large and small subunits.

It is found in the cytoplasm. It catalyses the reaction Exonucleolytic cleavage in either 5'- to 3'- or 3'- to 5'-direction to yield nucleoside 5'-phosphates.. In terms of biological role, bidirectionally degrades single-stranded DNA into large acid-insoluble oligonucleotides, which are then degraded further into small acid-soluble oligonucleotides. This is Exodeoxyribonuclease 7 large subunit from Chlamydia pneumoniae (Chlamydophila pneumoniae).